A 416-amino-acid polypeptide reads, in one-letter code: MVFIEDVEAHEVLDSRGNPTVRATVRLSDGTEASAIVPSGASTGKREALELRDKDDRYAGKGVLKAVSNVNEKIAEAVIGLDAYNQKAVDAEMLELDGTHNYSNLGANAVLGVSMAVARAAAKSLNIPLYRYLGGANASILPVPMFNIINGGAHANNSVDFQEFMIMPFGFSTFSEALRAATEIYHKLKSILNAAGHSTAVGDEGGFAPNLKDNEEPLKLISQAVKEAGYELGSQIKLALDVASSELYKDGKYELEGKKFSSAELISYYEKLCEKYPIFSIEDGLSEDDWSGWAELTKRLGSKVQLVGDDLFVTNEKILREGIEKNIANAILIKPNQIGSVTQTMQTVRLAQRNGYRCIMSHRSGESEDAFIADFAVALNTGEIKTGATSRSERNAKYNRLLEIELEAGEFLGDNI.

Gln162 serves as a coordination point for (2R)-2-phosphoglycerate. Glu204 (proton donor) is an active-site residue. Asp241, Glu282, and Asp309 together coordinate Mg(2+). Positions 334, 363, 364, and 385 each coordinate (2R)-2-phosphoglycerate. The Proton acceptor role is filled by Lys334.

It belongs to the enolase family. The cofactor is Mg(2+).

It is found in the cytoplasm. The protein localises to the secreted. It localises to the cell surface. It catalyses the reaction (2R)-2-phosphoglycerate = phosphoenolpyruvate + H2O. It functions in the pathway carbohydrate degradation; glycolysis; pyruvate from D-glyceraldehyde 3-phosphate: step 4/5. Functionally, catalyzes the reversible conversion of 2-phosphoglycerate (2-PG) into phosphoenolpyruvate (PEP). It is essential for the degradation of carbohydrates via glycolysis. This Campylobacter concisus (strain 13826) protein is Enolase.